The chain runs to 596 residues: Aspartate--tRNA(Asp/Asn) ligase (596 aa).

Glu172 lines the L-aspartate pocket. The interval 196-199 is aspartate; that stretch reads QLFK. Arg218 is a binding site for L-aspartate. Residues 218–220 and Gln227 each bind ATP; that span reads RDE. An L-aspartate-binding site is contributed by His450. Glu484 is an ATP binding site. L-aspartate is bound at residue Arg491. 536-539 contacts ATP; that stretch reads GLDR.

The protein belongs to the class-II aminoacyl-tRNA synthetase family. Type 1 subfamily. Homodimer.

The protein localises to the cytoplasm. It catalyses the reaction tRNA(Asx) + L-aspartate + ATP = L-aspartyl-tRNA(Asx) + AMP + diphosphate. In terms of biological role, aspartyl-tRNA synthetase with relaxed tRNA specificity since it is able to aspartylate not only its cognate tRNA(Asp) but also tRNA(Asn). Reaction proceeds in two steps: L-aspartate is first activated by ATP to form Asp-AMP and then transferred to the acceptor end of tRNA(Asp/Asn). The sequence is that of Aspartate--tRNA(Asp/Asn) ligase from Acidithiobacillus ferrooxidans (strain ATCC 23270 / DSM 14882 / CIP 104768 / NCIMB 8455) (Ferrobacillus ferrooxidans (strain ATCC 23270)).